The sequence spans 907 residues: Epidermal growth factor receptor substrate 15-like 1 (907 aa).

At Ala-2 the chain carries N-acetylalanine. The 90-residue stretch at 15–104 folds into the EH 1 domain; it reads GNPLYESYYK…SLTMPPPKFH (90 aa). Residues 15–368 form an interaction with DAB2 region; it reads GNPLYESYYK…PSERGTPIPD (354 aa). The EF-hand 1 domain occupies 48-83; sequence LSDIILGKIWDLADPEGKGFLDKQGFYVALRLVACA. Tyr-74 bears the Phosphotyrosine mark. Ser-107 and Ser-108 each carry phosphoserine. One can recognise an EH 2 domain in the interval 127-215; the sequence is EKAKFDGIFE…PPLIPPSKRK (89 aa). The region spanning 159 to 194 is the EF-hand 2 domain; the sequence is LPLDVLGRVWDLSDIDKDGHLDRDEFAVAMHLVYRA. Residues Asp-172, Asp-174, Asp-176, His-178, and Glu-183 each coordinate Ca(2+). A phosphoserine mark is found at Ser-229, Ser-244, Ser-253, Ser-255, and Ser-259. The disordered stretch occupies residues 229–260; the sequence is SPPPKDSLRSTPSHGSVSSLNSTGSLSPKHSV. Low complexity predominate over residues 241–255; the sequence is SHGSVSSLNSTGSLS. EF-hand domains are found at residues 272–307 and 308–341; these read ADKMRFDEIFLKTDLDLDGYVSGQEVKEIFMHSGLT and QNLLAHIWALADTRQTGKLSKEQFALAMYFIQQK. The EH 3 domain maps to 273 to 363; that stretch reads DKMRFDEIFL…PDMVPPSERG (91 aa). Ser-360 is subject to Phosphoserine. A Phosphothreonine modification is found at Thr-364. 2 positions are modified to phosphoserine: Ser-369 and Ser-375. A coiled-coil region spans residues 384–551; it reads LDDISQEIAQ…RSKLSQLQES (168 aa). Phosphoserine is present on Ser-558. Tyr-562 bears the Phosphotyrosine mark. Ser-610 is subject to Phosphoserine. Residues 611 to 860 form a disordered region; it reads QELHPDPFQA…SSSGFADFTS (250 aa). Basic and acidic residues predominate over residues 622–636; that stretch reads DPFKSDPFKGADPFK. Over residues 643 to 652 the composition is skewed to polar residues; sequence DPFSEQQTAA. Phosphoserine occurs at positions 664, 670, 695, 715, and 732. A compositionally biased stretch (polar residues) spans 682 to 696; that stretch reads NDPFTSDPFTKNPSL. Residues 703–743 are compositionally biased toward low complexity; the sequence is FESSDPFSSSSISSKGSDPFGTLDPFGSSSFSSAEGFADFS. Positions 776 to 790 are enriched in pro residues; that stretch reads ALPPKKPAPPRPKPP. Ser-791 carries the phosphoserine modification. Residues 791–802 are compositionally biased toward polar residues; the sequence is SGQSTPVSQLGS. Position 795 is a phosphothreonine (Thr-795). Positions 840–853 are enriched in low complexity; the sequence is APSSSAKPPKTSSS. 2 UIM domains span residues 863–882 and 889–907; these read NEEQQLAWAKRESEKAEQER and QEQEDLELAIALSKADMPA.

As to quaternary structure, interacts with EPS15, AGFG1/HRB and AGFG2/HRBL. Associates with the clathrin-associated adapter protein complex 2 (AP-2). Interacts with FCHO1. Interacts with FCHO2. Interacts (via EH domains) with DAB2. Interacts with UBQLN1 (via ubiquitin-like domain). Interacts with CAVIN3 (via leucine-zipper domain). Interacts with REPS2. Phosphorylated on tyrosine residues by EGFR.

It is found in the cell membrane. Its subcellular location is the nucleus. The protein localises to the membrane. The protein resides in the coated pit. In terms of biological role, seems to be a constitutive component of clathrin-coated pits that is required for receptor-mediated endocytosis. Involved in endocytosis of integrin beta-1 (ITGB1) and transferrin receptor (TFR); internalization of ITGB1 as DAB2-dependent cargo but not TFR seems to require association with DAB2. In Mus musculus (Mouse), this protein is Epidermal growth factor receptor substrate 15-like 1 (Eps15l1).